The chain runs to 216 residues: MKIGILGGTFNPIHNAHLRIAEEVRDRFDLGRVMFVPAASPPHKPLAGELSFDVRYRMVQLAIADNPAFTISDVEGRRGGKSYSIDTLKGLHSAFPHDEFFFIVGSDSFLDIGSWREYAAIFNLCNIVVVERPGAAVAALDAALPVAIAHEFCYYEAEKRLAHRSGYSVYSIAGTLLDISSSDIRELARLGRSIRYLVPQSVEHYIKEQRIYNDAR.

Belongs to the NadD family.

It catalyses the reaction nicotinate beta-D-ribonucleotide + ATP + H(+) = deamido-NAD(+) + diphosphate. It participates in cofactor biosynthesis; NAD(+) biosynthesis; deamido-NAD(+) from nicotinate D-ribonucleotide: step 1/1. Functionally, catalyzes the reversible adenylation of nicotinate mononucleotide (NaMN) to nicotinic acid adenine dinucleotide (NaAD). The chain is Probable nicotinate-nucleotide adenylyltransferase from Geotalea uraniireducens (strain Rf4) (Geobacter uraniireducens).